The chain runs to 239 residues: ATP synthase subunit a (239 aa).

The next 6 helical transmembrane spans lie at 31–51 (FLLQ…LGLG), 91–111 (VFPL…LGMI), 125–145 (AACA…FHGV), 151–171 (FMGP…IGHI), 194–214 (ILFF…LGLF), and 215–235 (TGFI…AGAI).

This sequence belongs to the ATPase A chain family. In terms of assembly, F-type ATPases have 2 components, CF(1) - the catalytic core - and CF(0) - the membrane proton channel. CF(1) has five subunits: alpha(3), beta(3), gamma(1), delta(1), epsilon(1). CF(0) has three main subunits: a(1), b(2) and c(9-12). The alpha and beta chains form an alternating ring which encloses part of the gamma chain. CF(1) is attached to CF(0) by a central stalk formed by the gamma and epsilon chains, while a peripheral stalk is formed by the delta and b chains.

It is found in the cell inner membrane. Key component of the proton channel; it plays a direct role in the translocation of protons across the membrane. In Syntrophobacter fumaroxidans (strain DSM 10017 / MPOB), this protein is ATP synthase subunit a.